The chain runs to 310 residues: UPF0282 protein PF0593 (310 aa).

This sequence belongs to the UPF0282 family.

The sequence is that of UPF0282 protein PF0593 from Pyrococcus furiosus (strain ATCC 43587 / DSM 3638 / JCM 8422 / Vc1).